The following is a 329-amino-acid chain: U5 small nuclear ribonucleoprotein TSSC4 (329 aa).

2 disordered regions span residues 1-88 (MAEA…MSST) and 104-156 (ARRA…PDYV). The segment covering 22–41 (DTLPSDTVSLSDSDSDLSLP) has biased composition (low complexity). 6 positions are modified to phosphoserine: Ser-60, Ser-67, Ser-86, Ser-132, Ser-143, and Ser-146. The hom2; mediates interaction with the U5 snRNP complexes and required for spliceosomal tri-snRNP complex assembly stretch occupies residues 77 to 104 (VQPFHLRGMSSTFSQRSRDIFDCLEGAA). The segment at 149–316 (VPPVPDYVAH…SRKRSRDHFR (168 aa)) is interaction with SNRNP200. A hom3; mediates interaction with the U5 snRNP complexes region spans residues 150–186 (PPVPDYVAHPERWTKYSLEDVTEVSEQSNQATALAFL). A hom4; necessary for interaction with the PRPF19 complex and required for spliceosomal tri-snRNP complex assembly region spans residues 201-250 (FNQDPSSCGEGRVIFTKPVRGVEARHERKRVLGKVGEPGRGGLGNPATDR). Lys-217 is modified (N6-acetyllysine). The tract at residues 221-329 (GVEARHERKR…SSPEDPGAEV (109 aa)) is disordered. Position 265 is a phosphoserine (Ser-265). A compositionally biased stretch (basic residues) spans 306 to 317 (GSRKRSRDHFRN). Ser-321 carries the phosphoserine modification.

Belongs to the TSSC4 family. Interacts in a RNA-independent manner with distinct U5 snRNP-containing complexes, the mono-U5 snRNP and the post-splicing U5 snRNP-PRPF19 complex. Interacts with SNRNP200; the interaction is direct, excludes recruitment of C9ORF78 and WBP4 to SNRNP200 and negatively regulates its RNA helicase activity. Interacts with PRPF8; the interaction is direct. Expressed in fetal brain, lung, liver and kidney. Widely expressed in adult tissues.

The protein resides in the nucleus. The protein localises to the cytoplasm. Its function is as follows. Protein associated with the U5 snRNP, during its maturation and its post-splicing recycling and which is required for spliceosomal tri-snRNP complex assembly in the nucleus. Has a molecular sequestering activity and transiently hinders SNRNP200 binding sites for constitutive splicing factors that intervene later during the assembly of the spliceosome and splicing. Together with its molecular sequestering activity, may also function as a molecular adapter and placeholder, coordinating the assembly of the U5 snRNP and its association with the U4/U6 di-snRNP. In Homo sapiens (Human), this protein is U5 small nuclear ribonucleoprotein TSSC4.